A 1670-amino-acid chain; its full sequence is Protein TASOR (1670 aa).

The tract at residues 1-110 (MATAVETEAC…QIPRKSREKK (110 aa)) is disordered. N-acetylalanine is present on A2. The span at 67-78 (QSLSHEQPQDSS) shows a compositional bias: polar residues. S344 bears the Phosphoserine mark. K586 participates in a covalent cross-link: Glycyl lysine isopeptide (Lys-Gly) (interchain with G-Cter in SUMO2). Residues S633, S636, S673, and S800 each carry the phosphoserine modification. Glycyl lysine isopeptide (Lys-Gly) (interchain with G-Cter in SUMO2) cross-links involve residues K823 and K832. S843 carries the post-translational modification Phosphoserine. A Glycyl lysine isopeptide (Lys-Gly) (interchain with G-Cter in SUMO2) cross-link involves residue K872. The segment at 921–947 (TGGNARSPEDQLGKHGEKQTPGMKSPE) is disordered. Phosphoserine is present on residues S927, S971, and S979. A compositionally biased stretch (basic and acidic residues) spans 927-938 (SPEDQLGKHGEK). T982 and T1049 each carry phosphothreonine. S1103 is subject to Phosphoserine. Positions 1532-1545 (ETKGSRGTDQKKNT) are enriched in basic and acidic residues. Disordered stretches follow at residues 1532–1558 (ETKG…VQNS) and 1638–1670 (FLSA…SQEK). Composition is skewed to polar residues over residues 1546-1558 (QIEL…VQNS) and 1659-1670 (KSDSSRPYSQEK). Residue S1552 is modified to Phosphoserine.

This sequence belongs to the TASOR family. Component of the HUSH complex; at least composed of TASOR, PPHLN1 and MPHOSPH8. Interacts with MORC2; the interaction associateS MORC2 with the HUSH complex which recruits MORC2 to heterochromatic loci. Interacts with ZNF638; leading to recruitment of the HUSH complex to unintegrated retroviral DNA. Interacts with INPP5A, EML1, SV1L, GPSM2, ITGB3BP, CNTN1, ETFA, PSMD8, S100A10, MPHOSPH8, TMEM100, ALB, PARPBP, HCFC2, NCBP1 and SETDB1.

The protein resides in the nucleus. The protein localises to the chromosome. In terms of biological role, component of the HUSH complex, a multiprotein complex that mediates epigenetic repression. The HUSH complex is recruited to genomic loci rich in H3K9me3 and is required to maintain transcriptional silencing by promoting recruitment of SETDB1, a histone methyltransferase that mediates further deposition of H3K9me3, as well as MORC2. Also represses L1 retrotransposons in collaboration with MORC2 and, probably, SETDB1, the silencing is dependent of repressive epigenetic modifications, such as H3K9me3 mark. Silencing events often occur within introns of transcriptionally active genes, and lead to the down-regulation of host gene expression. The HUSH complex is also involved in the silencing of unintegrated retroviral DNA by being recruited by ZNF638: some part of the retroviral DNA formed immediately after infection remains unintegrated in the host genome and is transcriptionally repressed. Plays a crucial role in early embryonic development. Involved in the organization of spindle poles and spindle apparatus assembly during zygotic division. Plays an important role in maintaining epiblast fitness or potency. The polypeptide is Protein TASOR (Homo sapiens (Human)).